Consider the following 396-residue polypeptide: Elongation factor Tu (396 aa).

Residues K10–E206 form the tr-type G domain. The tract at residues G19 to T26 is G1. Residue G19–T26 participates in GTP binding. T26 lines the Mg(2+) pocket. The segment at G60–N64 is G2. The interval D81 to G84 is G3. GTP is bound by residues D81–H85 and N136–D139. Residues N136–D139 form a G4 region. The G5 stretch occupies residues S174–K176.

It belongs to the TRAFAC class translation factor GTPase superfamily. Classic translation factor GTPase family. EF-Tu/EF-1A subfamily. Monomer.

The protein localises to the cytoplasm. It catalyses the reaction GTP + H2O = GDP + phosphate + H(+). In terms of biological role, GTP hydrolase that promotes the GTP-dependent binding of aminoacyl-tRNA to the A-site of ribosomes during protein biosynthesis. In Cupriavidus necator (strain ATCC 17699 / DSM 428 / KCTC 22496 / NCIMB 10442 / H16 / Stanier 337) (Ralstonia eutropha), this protein is Elongation factor Tu.